The following is a 250-amino-acid chain: Ribosomal RNA small subunit methyltransferase J (250 aa).

S-adenosyl-L-methionine contacts are provided by residues arginine 96–aspartate 97 and aspartate 168.

The protein belongs to the methyltransferase superfamily. RsmJ family.

The protein localises to the cytoplasm. It carries out the reaction guanosine(1516) in 16S rRNA + S-adenosyl-L-methionine = N(2)-methylguanosine(1516) in 16S rRNA + S-adenosyl-L-homocysteine + H(+). Its function is as follows. Specifically methylates the guanosine in position 1516 of 16S rRNA. This is Ribosomal RNA small subunit methyltransferase J from Neisseria meningitidis serogroup B (strain ATCC BAA-335 / MC58).